The primary structure comprises 299 residues: Very long chain fatty acid elongase 5 (299 aa).

Met-1 bears the N-acetylmethionine mark. A run of 7 helical transmembrane segments spans residues 26 to 46 (WFLLDNYIPTFVCSAIYLLIV), 64 to 84 (ILVVYNLGLTLLSLYMFYELV), 112 to 132 (VLWWYYFSKLIEFMDTFFFIL), 139 to 158 (ITVLHVYHHATMLNIWWFVM), 168 to 187 (FGATLNSFIHVLMYSYYGLS), 205 to 225 (GQLVQFVLTIIQTSCGVIWPC), and 227 to 247 (FPLGWLYFQIGYMISLIALFT).

The protein belongs to the ELO family. ELOVL5 subfamily. As to quaternary structure, interacts with TECR. Highly expressed in lung and brain.

It localises to the endoplasmic reticulum membrane. The protein resides in the cell projection. It is found in the dendrite. The catalysed reaction is a very-long-chain acyl-CoA + malonyl-CoA + H(+) = a very-long-chain 3-oxoacyl-CoA + CO2 + CoA. It carries out the reaction (6Z,9Z,12Z,15Z)-octadecatetraenoyl-CoA + malonyl-CoA + H(+) = (8Z,11Z,14Z,17Z)-3-oxoicosatetraenoyl-CoA + CO2 + CoA. The enzyme catalyses (6Z,9Z,12Z)-octadecatrienoyl-CoA + malonyl-CoA + H(+) = (8Z,11Z,14Z)-3-oxoeicosatrienoyl-CoA + CO2 + CoA. It catalyses the reaction (5Z,8Z,11Z,14Z,17Z)-eicosapentaenoyl-CoA + malonyl-CoA + H(+) = 3-oxo-(7Z,10Z,13Z,16Z,19Z)-docosapentaenoyl-CoA + CO2 + CoA. The catalysed reaction is (5Z,8Z,11Z,14Z)-eicosatetraenoyl-CoA + malonyl-CoA + H(+) = (7Z,10Z,13Z,16Z)-3-oxodocosatetraenoyl-CoA + CO2 + CoA. It carries out the reaction (9Z,12Z,15Z)-octadecatrienoyl-CoA + malonyl-CoA + H(+) = (11Z,14Z,17Z)-3-oxoeicosatrienoyl-CoA + CO2 + CoA. The enzyme catalyses (9Z)-hexadecenoyl-CoA + malonyl-CoA + H(+) = 3-oxo-(11Z)-octadecenoyl-CoA + CO2 + CoA. It catalyses the reaction (9Z)-octadecenoyl-CoA + malonyl-CoA + H(+) = 3-oxo-(11Z)-eicosenoyl-CoA + CO2 + CoA. The catalysed reaction is (11Z)-octadecenoyl-CoA + malonyl-CoA + H(+) = 3-oxo-(13Z)-eicosenoyl-CoA + CO2 + CoA. It carries out the reaction (9Z,12Z)-octadecadienoyl-CoA + malonyl-CoA + H(+) = (11Z,14Z)-3-oxoicosa-11,14-dienoyl-CoA + CO2 + CoA. Its pathway is lipid metabolism; polyunsaturated fatty acid biosynthesis. Catalyzes the first and rate-limiting reaction of the four reactions that constitute the long-chain fatty acids elongation cycle. This endoplasmic reticulum-bound enzymatic process allows the addition of 2 carbons to the chain of long- and very long-chain fatty acids (VLCFAs) per cycle. Condensing enzyme that acts specifically toward polyunsaturated acyl-CoA with the higher activity toward C18:3(n-6) acyl-CoA. May participate in the production of monounsaturated and of polyunsaturated VLCFAs of different chain lengths that are involved in multiple biological processes as precursors of membrane lipids and lipid mediators. In conditions where the essential linoleic and alpha linoleic fatty acids are lacking it is also involved in the synthesis of Mead acid from oleic acid. This is Very long chain fatty acid elongase 5 from Rattus norvegicus (Rat).